The sequence spans 725 residues: Glutamine-dependent NAD(+) synthetase (725 aa).

Residues 4-274 (LKVATCNLNQ…VEVIISQVDL (271 aa)) form the CN hydrolase domain. Catalysis depends on E44, which acts as the Proton acceptor; for glutaminase activity. The For glutaminase activity role is filled by K113. C174 (nucleophile; for glutaminase activity) is an active-site residue. The ligase stretch occupies residues 324–709 (YHSPQEEIAF…FPEEEANSNK (386 aa)). 354–361 (PLSGGADS) serves as a coordination point for ATP. The active site involves S356.

The protein in the C-terminal section; belongs to the NAD synthetase family.

It carries out the reaction deamido-NAD(+) + L-glutamine + ATP + H2O = L-glutamate + AMP + diphosphate + NAD(+) + H(+). It functions in the pathway cofactor biosynthesis; NAD(+) biosynthesis; NAD(+) from deamido-NAD(+) (L-Gln route): step 1/1. In Arabidopsis thaliana (Mouse-ear cress), this protein is Glutamine-dependent NAD(+) synthetase.